The chain runs to 449 residues: Bifunctional protein GlmU (449 aa).

A pyrophosphorylase region spans residues 1 to 225 (MLSVAILAAG…NGELQGINNR (225 aa)). UDP-N-acetyl-alpha-D-glucosamine is bound by residues 7 to 10 (LAAG), lysine 21, glutamine 73, and 78 to 79 (GT). Position 103 (aspartate 103) interacts with Mg(2+). Positions 140, 154, 169, and 223 each coordinate UDP-N-acetyl-alpha-D-glucosamine. A Mg(2+)-binding site is contributed by asparagine 223. A linker region spans residues 226-246 (IHLSECEECIQNSIKEKHMLN). Positions 247–449 (GVTFINKASC…NIENWKKKKS (203 aa)) are N-acetyltransferase. UDP-N-acetyl-alpha-D-glucosamine is bound by residues arginine 328 and lysine 346. The Proton acceptor role is filled by histidine 358. UDP-N-acetyl-alpha-D-glucosamine-binding residues include tyrosine 361 and asparagine 372. 3 residues coordinate acetyl-CoA: alanine 375, alanine 418, and arginine 435.

The protein in the N-terminal section; belongs to the N-acetylglucosamine-1-phosphate uridyltransferase family. In the C-terminal section; belongs to the transferase hexapeptide repeat family. Homotrimer. Mg(2+) serves as cofactor.

It localises to the cytoplasm. The enzyme catalyses alpha-D-glucosamine 1-phosphate + acetyl-CoA = N-acetyl-alpha-D-glucosamine 1-phosphate + CoA + H(+). It carries out the reaction N-acetyl-alpha-D-glucosamine 1-phosphate + UTP + H(+) = UDP-N-acetyl-alpha-D-glucosamine + diphosphate. Its pathway is nucleotide-sugar biosynthesis; UDP-N-acetyl-alpha-D-glucosamine biosynthesis; N-acetyl-alpha-D-glucosamine 1-phosphate from alpha-D-glucosamine 6-phosphate (route II): step 2/2. The protein operates within nucleotide-sugar biosynthesis; UDP-N-acetyl-alpha-D-glucosamine biosynthesis; UDP-N-acetyl-alpha-D-glucosamine from N-acetyl-alpha-D-glucosamine 1-phosphate: step 1/1. It functions in the pathway bacterial outer membrane biogenesis; LPS lipid A biosynthesis. Functionally, catalyzes the last two sequential reactions in the de novo biosynthetic pathway for UDP-N-acetylglucosamine (UDP-GlcNAc). The C-terminal domain catalyzes the transfer of acetyl group from acetyl coenzyme A to glucosamine-1-phosphate (GlcN-1-P) to produce N-acetylglucosamine-1-phosphate (GlcNAc-1-P), which is converted into UDP-GlcNAc by the transfer of uridine 5-monophosphate (from uridine 5-triphosphate), a reaction catalyzed by the N-terminal domain. This chain is Bifunctional protein GlmU, found in Prochlorococcus marinus (strain AS9601).